A 153-amino-acid polypeptide reads, in one-letter code: Aspartate carbamoyltransferase regulatory chain (153 aa).

4 residues coordinate Zn(2+): C109, C114, C138, and C141.

The protein belongs to the PyrI family. In terms of assembly, contains catalytic and regulatory chains. Zn(2+) serves as cofactor.

In terms of biological role, involved in allosteric regulation of aspartate carbamoyltransferase. The sequence is that of Aspartate carbamoyltransferase regulatory chain from Salmonella paratyphi A (strain ATCC 9150 / SARB42).